We begin with the raw amino-acid sequence, 99 residues long: Integration host factor subunit alpha (99 aa).

Belongs to the bacterial histone-like protein family. In terms of assembly, heterodimer of an alpha and a beta chain.

In terms of biological role, this protein is one of the two subunits of integration host factor, a specific DNA-binding protein that functions in genetic recombination as well as in transcriptional and translational control. In Anaeromyxobacter sp. (strain Fw109-5), this protein is Integration host factor subunit alpha.